Here is a 217-residue protein sequence, read N- to C-terminus: Cytidylate kinase (217 aa).

10–18 (GPAGAGKST) serves as a coordination point for ATP.

Belongs to the cytidylate kinase family. Type 1 subfamily.

The protein localises to the cytoplasm. It carries out the reaction CMP + ATP = CDP + ADP. The catalysed reaction is dCMP + ATP = dCDP + ADP. The polypeptide is Cytidylate kinase (Alkaliphilus oremlandii (strain OhILAs) (Clostridium oremlandii (strain OhILAs))).